Reading from the N-terminus, the 143-residue chain is Flagellar assembly factor FliW (143 aa).

It belongs to the FliW family. As to quaternary structure, interacts with translational regulator CsrA and flagellin(s).

It localises to the cytoplasm. Its function is as follows. Acts as an anti-CsrA protein, binds CsrA and prevents it from repressing translation of its target genes, one of which is flagellin. Binds to flagellin and participates in the assembly of the flagellum. This is Flagellar assembly factor FliW from Clostridium botulinum (strain 657 / Type Ba4).